Here is a 32-residue protein sequence, read N- to C-terminus: Dermatoxin-J2 (32 aa).

Glutamine 32 carries the glutamine amide modification.

In terms of tissue distribution, expressed by the skin glands.

The protein resides in the secreted. Its function is as follows. Antimicrobial peptide. The polypeptide is Dermatoxin-J2 (Phasmahyla jandaia (Jandaia leaf frog)).